Reading from the N-terminus, the 48-residue chain is Thiamine thiazole synthase, chloroplastic (48 aa).

Substrate-binding residues include alanine 18 and valine 40.

This sequence belongs to the THI4 family. Homooctamer. Fe cation is required as a cofactor.

Its subcellular location is the plastid. It localises to the chloroplast. The enzyme catalyses [ADP-thiazole synthase]-L-cysteine + glycine + NAD(+) = [ADP-thiazole synthase]-dehydroalanine + ADP-5-ethyl-4-methylthiazole-2-carboxylate + nicotinamide + 3 H2O + 2 H(+). Involved in biosynthesis of the thiamine precursor thiazole. Catalyzes the conversion of NAD and glycine to adenosine diphosphate 5-(2-hydroxyethyl)-4-methylthiazole-2-carboxylic acid (ADT), an adenylated thiazole intermediate. The reaction includes an iron-dependent sulfide transfer from a conserved cysteine residue of the protein to a thiazole intermediate. The enzyme can only undergo a single turnover, which suggests it is a suicide enzyme. May have additional roles in adaptation to various stress conditions and in DNA damage tolerance. This is Thiamine thiazole synthase, chloroplastic (THI1) from Populus euphratica (Euphrates poplar).